Here is a 627-residue protein sequence, read N- to C-terminus: Altered inheritance of mitochondria protein 9, mitochondrial (627 aa).

The N-terminal 43 residues, 1 to 43 (MIRYTVAGHSRRCVVGASKRVGAIKCITVAATKRFISNKPNEV), are a transit peptide targeting the mitochondrion.

This sequence belongs to the AIM9 family.

It is found in the mitochondrion. The sequence is that of Altered inheritance of mitochondria protein 9, mitochondrial (AIM9) from Saccharomyces cerevisiae (strain YJM789) (Baker's yeast).